A 393-amino-acid chain; its full sequence is Glutamate 5-kinase (393 aa).

Lys-17 provides a ligand contact to ATP. Ser-57, Asp-144, and Asn-156 together coordinate substrate. 176 to 177 provides a ligand contact to ATP; the sequence is SD. The PUA domain maps to 282–359; it reads AGSIAIDAGA…AEIAAILGYA (78 aa). Residues 374 to 393 form a disordered region; that stretch reads APSGARSEEGGNEKKGKLHA. Residues 379 to 393 show a composition bias toward basic and acidic residues; it reads RSEEGGNEKKGKLHA.

Belongs to the glutamate 5-kinase family.

The protein localises to the cytoplasm. The catalysed reaction is L-glutamate + ATP = L-glutamyl 5-phosphate + ADP. It functions in the pathway amino-acid biosynthesis; L-proline biosynthesis; L-glutamate 5-semialdehyde from L-glutamate: step 1/2. In terms of biological role, catalyzes the transfer of a phosphate group to glutamate to form L-glutamate 5-phosphate. The sequence is that of Glutamate 5-kinase from Sinorhizobium fredii (strain NBRC 101917 / NGR234).